The following is a 336-amino-acid chain: Potassium channel subfamily K member 1 (336 aa).

At 1-20 (MLQSLAGSSCVRLVERHRSA) the chain is on the cytoplasmic side. Residues 21–41 (WCFGFLVLGYLLYLVFGAVVF) form a helical membrane-spanning segment. The Extracellular segment spans residues 42 to 103 (SSVELPYEDL…SNASGNWNWD (62 aa)). An N-linked (GlcNAc...) asparagine glycan is attached at N95. Residues 104–116 (FTSALFFASTVLS) constitute an intramembrane region (helical). Residues 117–122 (TTGYGH) lie within the membrane without spanning it. The interval 117–122 (TTGYGH) is selectivity filter 1. The Extracellular segment spans residues 123–132 (TVPLSDGGKA). The chain crosses the membrane as a helical span at residues 133-156 (FCIIYSVIGIPFTLLFLTAVVQRV). Topologically, residues 157–181 (TIHVTRRPVLYFHVRWGFSKQAVAI) are cytoplasmic. Residues 182–202 (VHAVLLGVVTVSCFFFIPAAV) form a helical membrane-spanning segment. The Extracellular portion of the chain corresponds to 203–211 (FSVLEDDWN). Residues 212 to 224 (FLESFYFCFISLS) constitute an intramembrane region (helical). Residues 225-230 (TIGLGD) are selectivity filter 2. An intramembrane segment occupies 225 to 231 (TIGLGDY). Residues 232-243 (VPGEGYNQKFRE) are Extracellular-facing. The chain crosses the membrane as a helical span at residues 244 to 267 (LYKIGITCYLLLGLIAMLVVLETF). The Cytoplasmic segment spans residues 268–336 (CELHELKKFR…PALADGASDH (69 aa)). Residue K274 forms a Glycyl lysine isopeptide (Lys-Gly) (interchain with G-Cter in SUMO) linkage. The important for intracellular retention in recycling endosomes stretch occupies residues 293 to 299 (IIEHDQL). The disordered stretch occupies residues 307–336 (QAAGVQEDQKQNEPFVSPQPPALADGASDH).

Belongs to the two pore domain potassium channel (TC 1.A.1.8) family. As to quaternary structure, homodimer; disulfide-linked. Heterodimer with KCNK2; disulfide-linked. In astrocytes, forms mostly heterodimeric potassium channels with KCNK2, with only a minor proportion of functional channels containing homodimeric KCNK1. Interacts with KCNK3 and KCNK9, forming functional heterodimeric channels. Interacts with GNG4. Identified in a complex with PSD and ARF6; interacts only with PSD that is bound to ARF6. Interacts with UBE2I. Sumoylation is controversial. Sumoylated by UBE2I. Not sumoylated when expressed in xenopus oocytes or mammalian cells. Sumoylation inactivates the channel, but does not interfere with expression at the cell membrane. Sumoylation of a single subunit is sufficient to silence the dimeric channel. Sumoylation of KCNK1 is sufficient to silence heterodimeric channels formed by KCNK1 and KCNK3 or KCNK9. Desumoylated by SENP1; this activates the channel. Desumoylated by SENP1; this strongly increases halothane-mediated activation of heterodimeric channels formed with KCNK9. SENP1 treatment has no effect.

Its subcellular location is the cell membrane. It localises to the recycling endosome. It is found in the synaptic cell membrane. The protein localises to the cytoplasmic vesicle. The protein resides in the perikaryon. Its subcellular location is the cell projection. It localises to the dendrite. It is found in the apical cell membrane. It carries out the reaction K(+)(in) = K(+)(out). The enzyme catalyses NH4(+)(in) = NH4(+)(out). It catalyses the reaction Na(+)(in) = Na(+)(out). The catalysed reaction is Rb(+)(in) = Rb(+)(out). It carries out the reaction Cs(+)(in) = Cs(+)(out). The enzyme catalyses Li(+)(in) = Li(+)(out). It catalyses the reaction L-glutamate(out) = L-glutamate(in). The catalysed reaction is chloride(in) = chloride(out). Functionally, ion channel that contributes to passive transmembrane potassium transport and to the regulation of the resting membrane potential in brain astrocytes, but also in kidney and in other tissues. Forms dimeric channels through which potassium ions pass in accordance with their electrochemical gradient. The channel is selective for K(+) ions at physiological potassium concentrations and at neutral pH, but becomes permeable to Na(+) at subphysiological K(+) levels and upon acidification of the extracellular medium. The homodimer has very low potassium channel activity, when expressed in heterologous systems, and can function as weakly inward rectifying potassium channel. Channel activity is modulated by activation of serotonin receptors. Heterodimeric channels containing KCNK1 and KCNK2 have much higher activity, and may represent the predominant form in astrocytes. Heterodimeric channels containing KCNK1 and KCNK3 or KCNK9 have much higher activity. Heterodimeric channels formed by KCNK1 and KCNK9 may contribute to halothane-sensitive currents. Mediates outward rectifying potassium currents in dentate gyrus granule cells and contributes to the regulation of their resting membrane potential. Contributes to the regulation of action potential firing in dentate gyrus granule cells and down-regulates their intrinsic excitability. In astrocytes, the heterodimer formed by KCNK1 and KCNK2 is required for rapid glutamate release in response to activation of G-protein coupled receptors, such as F2R and CNR1. Required for normal ion and water transport in the kidney. Contributes to the regulation of the resting membrane potential of pancreatic beta cells. The low channel activity of homodimeric KCNK1 may be due to sumoylation. The low channel activity may be due to rapid internalization from the cell membrane and retention in recycling endosomes. Permeable to monovalent cations with ion selectivity for K(+) &gt; Rb(+) &gt;&gt; NH4(+) &gt;&gt; Cs(+) = Na(+) = Li(+). This is Potassium channel subfamily K member 1 from Bos taurus (Bovine).